The following is an 83-amino-acid chain: Large ribosomal subunit protein eL43 (83 aa).

Zn(2+) is bound by residues C38, C41, C56, and C59. Residues 38 to 59 (CPVCGRKAVKRISTGIWQCQKC) form a C4-type zinc finger.

Belongs to the eukaryotic ribosomal protein eL43 family. Putative zinc-binding subfamily. In terms of assembly, part of the 50S ribosomal subunit. It depends on Zn(2+) as a cofactor.

Functionally, binds to the 23S rRNA. The protein is Large ribosomal subunit protein eL43 of Pyrococcus furiosus (strain ATCC 43587 / DSM 3638 / JCM 8422 / Vc1).